Here is a 1203-residue protein sequence, read N- to C-terminus: Cation-transporting ATPase catp-5 (1203 aa).

The Cytoplasmic segment spans residues 1-68; the sequence is MNTSEREPLL…YAYKETIGRQ (68 aa). The disordered stretch occupies residues 21-42; the sequence is TTDNPSTKIMKREKDNPKAKTT. A helical membrane pass occupies residues 69–89; that stretch reads ILFWLLTIVTLGFYQLLAYWV. Topologically, residues 90–209 are extracellular; sequence KSLFVKVRFQ…RKIYNMNALA (120 aa). Residues 210-230 form a helical membrane-spanning segment; sequence LALTPILVILFKEVLGPFYLF. At 231 to 242 the chain is on the cytoplasmic side; that stretch reads QCFSVALWYSDN. The helical transmembrane segment at 243 to 263 threads the bilayer; the sequence is YAYYASVIVIITVGSAAVAVY. At 264 to 297 the chain is on the extracellular side; the sequence is QMRAQEKRIRNMVGDTISVIVRRDGHDITIDASE. Residues 298–318 traverse the membrane as a helical segment; sequence IVPMDILILPSNTFILPCDCL. Residues 319-414 are Cytoplasmic-facing; sequence LMNGTVIVNE…KPQEKEALKD (96 aa). Residues 415-435 traverse the membrane as a helical segment; that stretch reads VMVFILVLGFIALIGFIYTVI. Residues 436 to 451 lie on the Extracellular side of the membrane; that stretch reads EMVSRGESLKHIIIRS. A helical membrane pass occupies residues 452-472; the sequence is LDIITIVVPPALPAAMSVGII. The Cytoplasmic portion of the chain corresponds to 473–935; it reads NANSRLKKKK…KEGRCALVTS (463 aa). The active-site 4-aspartylphosphate intermediate is the aspartate 503. Residues 595–617 are disordered; it reads ETQDFDTVQPTVLRPPPEQATYH. Mg(2+) contacts are provided by aspartate 883 and aspartate 887. The chain crosses the membrane as a helical span at residues 936–956; it reads YAVSKYMAAYSLNEFLSVMLL. Residues 957–962 are Extracellular-facing; that stretch reads YNDGTN. Residues 963–983 traverse the membrane as a helical segment; sequence ISDGQFLYIDLVLITLVALFL. The Cytoplasmic segment spans residues 984-1007; that stretch reads GNTEASRKLSGIPPPRRLATSAFY. Residues 1008 to 1028 form a helical membrane-spanning segment; sequence FSVFGQMFFNIITQTTGYLLV. Residues 1029 to 1046 are Extracellular-facing; the sequence is RGQSWYVPNPEELDNTTT. Residues 1047–1067 traverse the membrane as a helical segment; the sequence is MIGTTVFFTSCCMYLGYAFVY. Residues 1068 to 1085 are Cytoplasmic-facing; it reads SKGHPYRRSVFTNWLLCG. Residues 1086 to 1106 traverse the membrane as a helical segment; it reads IIFVIGAINMVMIFTNMGFLM. At 1107–1120 the chain is on the extracellular side; it reads NLMGFVYVPSTSMR. A helical transmembrane segment spans residues 1121-1141; sequence FILLAISLAGVFLSLLYEHFF. Topologically, residues 1142 to 1203 are cytoplasmic; the sequence is VEKVVAIHFE…DRKETIESKC (62 aa).

The protein belongs to the cation transport ATPase (P-type) (TC 3.A.3) family. Type V subfamily. Expressed in the 20 intestinal cells and in the excretory cell.

It is found in the apical cell membrane. It catalyses the reaction ATP + H2O = ADP + phosphate + H(+). Its function is as follows. Involved in the uptake and/or transport of polyamines, probably through ATP hydrolysis. This contributes to the maintenance of intracellular polyamine levels. Polyamines are essential for cell proliferation and are implicated in cellular processes, ranging from DNA replication to apoptosis. This is Cation-transporting ATPase catp-5 from Caenorhabditis elegans.